The following is a 338-amino-acid chain: N-acetyl-gamma-glutamyl-phosphate reductase (338 aa).

Residue Cys148 is part of the active site.

The protein belongs to the NAGSA dehydrogenase family. Type 1 subfamily.

It is found in the cytoplasm. The catalysed reaction is N-acetyl-L-glutamate 5-semialdehyde + phosphate + NADP(+) = N-acetyl-L-glutamyl 5-phosphate + NADPH + H(+). The protein operates within amino-acid biosynthesis; L-arginine biosynthesis; N(2)-acetyl-L-ornithine from L-glutamate: step 3/4. In terms of biological role, catalyzes the NADPH-dependent reduction of N-acetyl-5-glutamyl phosphate to yield N-acetyl-L-glutamate 5-semialdehyde. The chain is N-acetyl-gamma-glutamyl-phosphate reductase from Leptospira borgpetersenii serovar Hardjo-bovis (strain JB197).